The primary structure comprises 475 residues: Ribulose bisphosphate carboxylase large chain (475 aa).

A propeptide spanning residues 1 to 2 (MS) is cleaved from the precursor. Pro3 is subject to N-acetylproline. Thr65, Asn123, and Thr173 together coordinate substrate. Lys175 acts as the Proton acceptor in catalysis. Lys177 contacts substrate. Mg(2+) is bound by residues Lys201, Asp203, and Glu204. Lys201 carries the post-translational modification N6-carboxylysine. Residues Glu204, His294, Arg295, His327, Lys334, Ser379, Gly381, Gly403, and Gly404 each coordinate substrate. The active-site Proton acceptor is the His294.

The protein belongs to the RuBisCO large chain family. Type I subfamily. In terms of assembly, heterohexadecamer of 8 large chains and 8 small chains. Mg(2+) serves as cofactor. The disulfide bond which can form between Cys-247 in the large chain dimeric partners within the hexadecamer appears to be associated with oxidative stress and protein turnover. The disulfide bonds reported in 1RBO may be the result of oxidation during crystallization.

It localises to the plastid. Its subcellular location is the chloroplast. It catalyses the reaction 2 (2R)-3-phosphoglycerate + 2 H(+) = D-ribulose 1,5-bisphosphate + CO2 + H2O. The catalysed reaction is D-ribulose 1,5-bisphosphate + O2 = 2-phosphoglycolate + (2R)-3-phosphoglycerate + 2 H(+). Its activity is regulated as follows. Abscisic acid (ABA) causes weak inhibition of RuBisCO catalytic activity, but more potent inhibition of RuBisCO activation. Functionally, ruBisCO catalyzes two reactions: the carboxylation of D-ribulose 1,5-bisphosphate, the primary event in carbon dioxide fixation, as well as the oxidative fragmentation of the pentose substrate in the photorespiration process. Both reactions occur simultaneously and in competition at the same active site. Binds to abscisic acid (ABA) which has weakly inhibits carboxylation and more strongly inhibits enzyme activation. In Spinacia oleracea (Spinach), this protein is Ribulose bisphosphate carboxylase large chain.